The primary structure comprises 343 residues: Protein SOSEKI 4 (343 aa).

Residues 18–109 form a DIX-like oligomerization domain region; that stretch reads RIVPVVYYLS…YVLKGSQILD (92 aa). The segment at 148 to 194 is disordered; sequence RKLSMDASTQTDDRRRRKSPVDEVNEVTELSREEITSPPQSDSSPET. Residues 184–194 show a composition bias toward polar residues; it reads SPPQSDSSPET. The Association to cell membranes signature appears at 233–234; that stretch reads CG.

This sequence belongs to the SOSEKI family. In terms of assembly, homodimer. Forms long polymer filaments with other SOKs proteins polymers (e.g. SOK1, SOK2, SOK3 and SOK4) crucial for polar localization and biological activity. Binds to ANGUSTIFOLIA (AN). As to expression, expressed during embryogenesis and in roots.

The protein localises to the cell membrane. Its function is as follows. SOSEKI proteins (SOK1-5) locally interpret global polarity cues and can influence cell division orientation to coordinate cell polarization relative to body axes, probably by guiding ANGUSTIFOLIA (AN) polarized localization. Positive regulator of auxin (indole-3-acetic acid, IAA) biosynthesis and signaling pathway leading to the modulation of seedling growth, plant and inflorescence development. Negative regulator of stress responses (e.g. salinity and osmotic stress). The polypeptide is Protein SOSEKI 4 (Arabidopsis thaliana (Mouse-ear cress)).